A 49-amino-acid chain; its full sequence is Large ribosomal subunit protein bL33A (49 aa).

Belongs to the bacterial ribosomal protein bL33 family.

The sequence is that of Large ribosomal subunit protein bL33A (rpmG1) from Enterococcus faecalis (strain ATCC 700802 / V583).